We begin with the raw amino-acid sequence, 69 residues long: MFFLGFIIVCASEEQSDNRLPNIDFGLDRGHSGRMTAEYLMGLAAANDPNGPGRRRRSPIVREEILRHP.

A signal peptide spans 1 to 21 (MFFLGFIIVCASEEQSDNRLP). The tract at residues 46 to 69 (ANDPNGPGRRRRSPIVREEILRHP) is disordered. Basic and acidic residues predominate over residues 60-69 (IVREEILRHP).

This sequence belongs to the scoloptoxin-21 family. Expressed by the venom gland.

The protein localises to the secreted. The polypeptide is U-scoloptoxin(21)-Sm2a (Scolopendra morsitans (Tanzanian blue ringleg centipede)).